Reading from the N-terminus, the 814-residue chain is Acyl-coenzyme A dehydrogenase (814 aa).

E497 acts as the Proton acceptor in catalysis.

Belongs to the acyl-CoA dehydrogenase family. It depends on FAD as a cofactor.

It catalyses the reaction a medium-chain 2,3-saturated fatty acyl-CoA + oxidized [electron-transfer flavoprotein] + H(+) = a medium-chain (2E)-enoyl-CoA + reduced [electron-transfer flavoprotein]. It carries out the reaction a long-chain 2,3-saturated fatty acyl-CoA + oxidized [electron-transfer flavoprotein] + H(+) = a long-chain (2E)-enoyl-CoA + reduced [electron-transfer flavoprotein]. The protein operates within lipid metabolism; fatty acid beta-oxidation. In terms of biological role, catalyzes the dehydrogenation of acyl-coenzymes A (acyl-CoAs) to 2-enoyl-CoAs, the first step of the beta-oxidation cycle of fatty acid degradation. Is required for E.coli to utilize dodecanoate or oleate as the sole carbon and energy source for growth. The protein is Acyl-coenzyme A dehydrogenase of Escherichia coli (strain K12).